The primary structure comprises 56 residues: MMQDLINYFLSYPEVLKKLKNREACLIGFSSNETETIIKAYNDYHLSSPTTREWDG.

The propeptide occupies 1-50; it reads MMQDLINYFLSYPEVLKKLKNREACLIGFSSNETETIIKAYNDYHLSSPT. Position 54 is a tryptophan derivative (Trp-54). A lipid anchor (3'-farnesyl-2',N2-cyclotryptophan) is attached at Trp-54.

As to quaternary structure, interacts directly with the sensor histidine kinase ComP and stimulates its activity. Trp-54 is modified by farnesylation, which is essential for activity. Modified by the tryptophan prenyltransferase ComQ before export to the extracellular environment. The type of isoprenyl derivative differs among the different pherotypes and depends on ComX primary sequence.

The protein localises to the secreted. In terms of biological role, part of a major quorum-sensing system that regulates the development of genetic competence. Acts through the activation of the two-component regulatory system ComP/ComA composed of a sensor histidine kinase, ComP, and a response regulator, ComA. This Bacillus mojavensis protein is ComX pheromone.